Consider the following 303-residue polypeptide: MENKKESSLLYILTGATSGLLADSIMHPVDTVRARVQIEKVGKSQYKGTFNALNQIIKNEGVSYLYKGFPIVATATVPAHALYFLGYEYSKQWVTDRYGKKWGESTITHFSAGFVADALGSLIWVPMDIIKQRLQVQTNTQKLNPNQTYYKGSFHAGKIILQEEGIRGLYRGFMPALATYGPFVGIYFSVYEKCKSTISSLLSKEKDQYLPIPYQLGSGFFAGAFAAAVTCPLDVIKTRIQVQRSTEKQIYKGMWDSFKTILKEEGPKAFVKGMGARIWWIAPGNALTIASYEQLKYLFKDLI.

Over 1–8 (MENKKESS) the chain is Mitochondrial intermembrane. 3 Solcar repeats span residues 6–93 (ESSL…SKQW), 104–197 (ESTI…CKST), and 210–298 (LPIP…LKYL). A helical membrane pass occupies residues 9 to 29 (LLYILTGATSGLLADSIMHPV). The Mitochondrial matrix portion of the chain corresponds to 30 to 67 (DTVRARVQIEKVGKSQYKGTFNALNQIIKNEGVSYLYK). The helical transmembrane segment at 68–88 (GFPIVATATVPAHALYFLGYE) threads the bilayer. The Mitochondrial intermembrane portion of the chain corresponds to 89–109 (YSKQWVTDRYGKKWGESTITH). A helical transmembrane segment spans residues 110–130 (FSAGFVADALGSLIWVPMDII). Residues 131-171 (KQRLQVQTNTQKLNPNQTYYKGSFHAGKIILQEEGIRGLYR) are Mitochondrial matrix-facing. A helical membrane pass occupies residues 172 to 192 (GFMPALATYGPFVGIYFSVYE). Residues 193-215 (KCKSTISSLLSKEKDQYLPIPYQ) are Mitochondrial intermembrane-facing. A helical membrane pass occupies residues 216-236 (LGSGFFAGAFAAAVTCPLDVI). The Mitochondrial matrix portion of the chain corresponds to 237-268 (KTRIQVQRSTEKQIYKGMWDSFKTILKEEGPK). The chain crosses the membrane as a helical span at residues 269–289 (AFVKGMGARIWWIAPGNALTI). The Mitochondrial intermembrane portion of the chain corresponds to 290 to 303 (ASYEQLKYLFKDLI).

It belongs to the mitochondrial carrier (TC 2.A.29) family.

The protein localises to the mitochondrion inner membrane. In terms of biological role, mitochondrial solute carriers shuttle metabolites, nucleotides, and cofactors through the mitochondrial inner membrane. In Dictyostelium discoideum (Social amoeba), this protein is Mitochondrial substrate carrier family protein E (mcfE).